Reading from the N-terminus, the 491-residue chain is MAGALLCALLLLQLLGRGEGKNEELRLYHYLFDTYDPGRRPVQEPEDTVTISLKVTLTNLISLNEKEETLTTSVWIGIDWQDYRLNYSKGDFGGVETLRVPSELVWLPEIVLENNIDGQFGVAYEANVLVSEGGYLSWLPPAIYRSTCAVEVTYFPFDWQNCSLVFRSQTYNAEEVEFVFAVDDEGKTISKIDIDTEAYTENGEWAIDFCPGVIRRHDGDSAGGPGETDVIYSLIIRRKPLFYVINIIVPCVLISGLVLLAYFLPAQAGGQKCTVSINVLLAQTVFLFLIAQKTPETSLSVPLLGRYLIFVMVVATLIVMNCVIVLNVSLRTPTTHAMSPRLRYVLLELLPQLLGSGAPPEIPRAASPPRRASSLGLLLRAEELILKKPRSELVFEQQRHRHGTWTATLCQNLGAAAPEIRCCVDAVNFVASSTRDQEATGEEVSDWVRMGKALDSICFWAALVLFLVGSSLIFLGAYFNRVPQLPYPPCM.

The first 20 residues, 1–20 (MAGALLCALLLLQLLGRGEG), serve as a signal peptide directing secretion. Residues 21 to 239 (KNEELRLYHY…VIYSLIIRRK (219 aa)) are Extracellular-facing. Asn86 and Asn161 each carry an N-linked (GlcNAc...) asparagine glycan. Cys148 and Cys162 are joined by a disulfide. Residues 240–264 (PLFYVINIIVPCVLISGLVLLAYFL) form a helical membrane-spanning segment. Residues 265 to 272 (PAQAGGQK) lie on the Cytoplasmic side of the membrane. Residues 273 to 291 (CTVSINVLLAQTVFLFLIA) form a helical membrane-spanning segment. At 292 to 306 (QKTPETSLSVPLLGR) the chain is on the extracellular side. Residues 307–328 (YLIFVMVVATLIVMNCVIVLNV) traverse the membrane as a helical segment. At 329–456 (SLRTPTTHAM…WVRMGKALDS (128 aa)) the chain is on the cytoplasmic side. Residues 457-480 (ICFWAALVLFLVGSSLIFLGAYFN) form a helical membrane-spanning segment. At 481–491 (RVPQLPYPPCM) the chain is on the extracellular side.

The protein belongs to the ligand-gated ion channel (TC 1.A.9) family. Acetylcholine receptor (TC 1.A.9.1) subfamily. Epsilon/CHRNE sub-subfamily.

The protein resides in the postsynaptic cell membrane. Its subcellular location is the cell membrane. It catalyses the reaction K(+)(in) = K(+)(out). The enzyme catalyses Na(+)(in) = Na(+)(out). Functionally, after binding acetylcholine, the AChR responds by an extensive change in conformation that affects all subunits and leads to opening of an ion-conducting channel across the plasma membrane. The sequence is that of Acetylcholine receptor subunit epsilon (CHRNE) from Bos taurus (Bovine).